A 205-amino-acid chain; its full sequence is Ras-related and estrogen-regulated growth inhibitor-like protein (205 aa).

Residues 1–205 (MSNFLHLKYN…NVFGKRRKSV (205 aa)) form a small GTPase-like region. GTP contacts are provided by residues 11 to 18 (EKSVSVTK), 58 to 64 (DPCSQTQ), and 123 to 126 (NKRD).

It belongs to the small GTPase superfamily. Ras family.

The enzyme catalyses GTP + H2O = GDP + phosphate + H(+). Binds GDP/GTP and may possess intrinsic GTPase activity. The protein is Ras-related and estrogen-regulated growth inhibitor-like protein (RERGL) of Homo sapiens (Human).